The primary structure comprises 73 residues: QGRMYQRFLRQHVDPDETGGNDHYLNLSRRNIQCPNRHEGVRFNTDIHEDLTNRRPIDEHEGVVRVTDKTEEG.

Pyrrolidone carboxylic acid is present on Gln-1.

This sequence belongs to the pancreatic ribonuclease family. Milk.

It is found in the secreted. Its function is as follows. Secretory RNase specific towards pyrimidine bases, with higher activity towards poly C than poly U. Inhibits cell-free translation. The chain is Lactogenin from Bos taurus (Bovine).